The sequence spans 484 residues: Arginine ADP-riboxanase OspC2 (484 aa).

NAD(+)-binding residues include His-143, Gln-144, Ser-145, Leu-149, Ile-162, Asn-172, Phe-188, His-206, Phe-211, Asp-231, and Glu-326. Glu-326 is an active-site residue. 2 ANK repeats span residues 414-444 (LYDV…DVNK) and 451-480 (SGDT…VSGK).

The protein belongs to the OspC family.

It localises to the secreted. The enzyme catalyses L-arginyl-[protein] + NAD(+) = ADP-riboxanated L-argininyl-[protein] + nicotinamide + NH4(+) + H(+). In terms of biological role, ADP-riboxanase effector that mediates arginine ADP-riboxanation of host caspases. ADP-riboxanation of host apoptotic caspases (CASP3 and CASP9) prevents their activation, thereby inhibiting host cell extrinsic and intrinsic apoptosis. Does not catalyze ADP-riboxanation of host CASP4/CASP11 or CASP8. In contrast to Ospc1 and OspC3, not able to inactivate host calmodulin. The protein is Arginine ADP-riboxanase OspC2 of Shigella flexneri.